Reading from the N-terminus, the 100-residue chain is Urease subunit gamma (100 aa).

This sequence belongs to the urease gamma subunit family. Heterotrimer of UreA (gamma), UreB (beta) and UreC (alpha) subunits. Three heterotrimers associate to form the active enzyme.

It localises to the cytoplasm. The enzyme catalyses urea + 2 H2O + H(+) = hydrogencarbonate + 2 NH4(+). It functions in the pathway nitrogen metabolism; urea degradation; CO(2) and NH(3) from urea (urease route): step 1/1. This Yersinia aldovae protein is Urease subunit gamma.